The primary structure comprises 85 residues: COMM domain-containing protein 6 (85 aa).

At Met-1 the chain carries N-acetylmethionine. The COMM domain occupies 18–85; that stretch reads QLIDFEWKLG…KEIAAIIETV (68 aa).

It belongs to the COMM domain-containing protein 6 family. Component of the commander complex consisting of the CCC subcomplex and the retriever subcomplex. Component of the CCC (COMMD/CCDC22/CCDC93) subcomplex consisting of COMMD1, COMMD2, COMMD3, COMMD4, COMMD5, COMMD6, COMMD7, COMMD8, COMMD9, COMMD10, CCDC22 and CCDC93; within the complex forms a heterodimer with COMMD1. May form a homodimer with isoform 1. Interacts with RELA, RELB, NFKB1/p105. Does not interact with NFKBIB. Interacts with CCDC22, CCDC93, SCNN1B, CUL4A.

The protein localises to the nucleus. It is found in the cytoplasm. In terms of biological role, scaffold protein in the commander complex that is essential for endosomal recycling of transmembrane cargos; the commander complex is composed of the CCC subcomplex and the retriever subcomplex. May modulate activity of cullin-RING E3 ubiquitin ligase (CRL) complexes. Down-regulates activation of NF-kappa-B. Inhibits TNF-induced NFKB1 activation. The chain is COMM domain-containing protein 6 (COMMD6) from Bos taurus (Bovine).